Reading from the N-terminus, the 361-residue chain is G-protein coupled receptor 183 (361 aa).

Over 1 to 31 (MDIQMANNFTPPSATPQGNDCDLYAHHSTAR) the chain is Extracellular. Residues 32 to 57 (IVMPLHYSLVFIIGLVGNLLALVVIV) form a helical membrane-spanning segment. The Cytoplasmic portion of the chain corresponds to 58–77 (QNRKKINSTTLYSTNLVISD). The helical transmembrane segment at 78–95 (ILFTTALPTRIAYYAMGF) threads the bilayer. R87 provides a ligand contact to 7alpha,25-dihydroxycholesterol. The Extracellular portion of the chain corresponds to 96 to 105 (DWRIGDALCR). Cysteines 104 and 181 form a disulfide. The helical transmembrane segment at 106–127 (ITALVFYINTYAGVNFMTCLSI) threads the bilayer. 2 residues coordinate 7alpha,25-dihydroxycholesterol: Y112 and Y116. The interval 126–134 (SIDRFIAVV) is interaction with G proteins. Residues 128-149 (DRFIAVVHPLRYNKIKRIEHAK) lie on the Cytoplasmic side of the membrane. A helical membrane pass occupies residues 150–168 (GVCIFVWILVFAQTLPLLI). At 169–192 (NPMSKQEAERITCMEYPNFEETKS) the chain is on the extracellular side. A helical membrane pass occupies residues 193-215 (LPWILLGACFIGYVLPLIIILIC). At 216-241 (YSQICCKLFRTAKQNPLTEKSGVNKK) the chain is on the cytoplasmic side. Residues 242–265 (ALNTIILIIVVFVLCFTPYHVAII) traverse the membrane as a helical segment. Y260 serves as a coordination point for 7alpha,25-dihydroxycholesterol. The Extracellular segment spans residues 266–287 (QHMIKKLRFSNFLECSQRHSFQ). The chain crosses the membrane as a helical span at residues 288 to 312 (ISLHFTVCLMNFNCCMDPFIYFFAC). Topologically, residues 313-361 (KGYKRKVMRMLKRQVSVSISSAVKSAPEENSREMTETQMMIHSKSSNGK) are cytoplasmic. Position 328 is a phosphoserine (S328). A disordered region spans residues 340–361 (EENSREMTETQMMIHSKSSNGK). Polar residues predominate over residues 348–361 (ETQMMIHSKSSNGK).

The protein belongs to the G-protein coupled receptor 1 family. As to quaternary structure, homodimer and heterodimer. Heterodimerizes with CXCR5; leading to modulate the interaction between of CXCL13 and CXCR5. Expressed abundantly in lymphoid tissues such as spleen and lymph node, and in B- and T-lymphocytes. Also highly expressed in lung, heart and gastrointestinal tract, and weakly expressed in the urogenital system and brain. Expressed in astrocytes.

The protein resides in the cell membrane. In terms of biological role, G-protein coupled receptor expressed in lymphocytes that acts as a chemotactic receptor for B-cells, T-cells, splenic dendritic cells, monocytes/macrophages and astrocytes. Receptor for oxysterol 7-alpha,25-dihydroxycholesterol (7-alpha,25-OHC) and other related oxysterols. Mediates cell positioning and movement of a number of cells by binding the 7-alpha,25-OHC ligand that forms a chemotactic gradient. Binding of 7-alpha,25-OHC mediates the correct localization of B-cells during humoral immune responses. Guides B-cell movement along the B-cell zone-T-cell zone boundary and later to interfollicular and outer follicular regions. Its specific expression during B-cell maturation helps position B-cells appropriately for mounting T-dependent antibody responses. Collaborates with CXCR5 to mediate B-cell migration; probably by forming a heterodimer with CXCR5 that affects the interaction between of CXCL13 and CXCR5. Also acts as a chemotactic receptor for some T-cells upon binding to 7-alpha,25-OHC ligand. Promotes follicular helper T (Tfh) cells differentiation by positioning activated T-cells at the follicle-T-zone interface, promoting contact of newly activated CD4 T-cells with activated dendritic cells and exposing them to Tfh-cell-promoting inducible costimulator (ICOS) ligand. Expression in splenic dendritic cells is required for their homeostasis, localization and ability to induce B- and T-cell responses: GPR183 acts as a chemotactic receptor in dendritic cells that mediates the accumulation of CD4(+) dendritic cells in bridging channels. Regulates migration of astrocytes and is involved in communication between astrocytes and macrophages. Promotes osteoclast precursor migration to bone surfaces. Signals constitutively through G(i)-alpha, but not G(s)-alpha or G(q)-alpha. Signals constitutively also via MAPK1/3 (ERK1/2). The sequence is that of G-protein coupled receptor 183 from Homo sapiens (Human).